The primary structure comprises 250 residues: Cyclopentanol dehydrogenase (250 aa).

Residues M18, D37, D63, V64, N90, Y155, K159, I188, T190, and T193 each contribute to the NAD(+) site. The Proton acceptor role is filled by Y155.

This sequence belongs to the short-chain dehydrogenases/reductases (SDR) family.

It carries out the reaction cyclopentanol + NAD(+) = cyclopentanone + NADH + H(+). The enzyme catalyses cyclohexanol + NAD(+) = cyclohexanone + NADH + H(+). It participates in alcohol metabolism; cyclopentanol degradation; 5-valerolactone from cyclopentanol: step 1/2. In terms of biological role, catalyzes the oxidation of cyclopentanol to cyclopentanone and cyclohexanol to cyclohexanone. The activity toward cyclohexanol is 60% that of cyclopentanol. This is Cyclopentanol dehydrogenase from Comamonas sp. (strain NCIMB 9872).